A 2988-amino-acid chain; its full sequence is NBPF family member NBPF14 (2988 aa).

Positions 75–119 (RQFKEEKLAEQLKQAEELRQYKVLVHSQERELTQLREKLREGRDA) form a coiled coil. 3 disordered regions span residues 161 to 200 (KLSP…SKVP), 451 to 474 (EKVQ…PEDS), and 520 to 566 (WEDA…EGYS). A compositionally biased stretch (acidic residues) spans 165 to 177 (ENDEDEDEDVQVE). 32 consecutive Olduvai domains span residues 165–259 (ENDE…NILP), 436–528 (ENDN…HIIP), 529–600 (ENES…VDIG), 601–692 (RHRW…PSCP), 695–750 (SREL…LDVD), 751–843 (RIKK…RSKK), 844–919 (ERRR…LDVD), 920–1012 (RIKK…RSKK), 1013–1105 (ERRR…PSCP), 1108–1163 (SREL…LDVD), 1164–1256 (RIKK…RSKK), 1257–1349 (ERRR…PSCP), 1352–1407 (SREL…LDVD), 1408–1500 (RIKK…RSKK), 1501–1593 (ERRR…PSCP), 1596–1651 (SREL…LDVD), 1652–1744 (RFKK…RSKK), 1745–1837 (ERRR…PSCP), 1840–1895 (SREL…LDVD), 1896–1988 (RIKK…RSKK), 1989–2081 (ERRR…PSCP), 2084–2139 (SREL…LDVD), 2140–2232 (RIKK…RSKK), 2233–2325 (ERRR…PSCP), 2328–2383 (SREL…LDVD), 2384–2476 (RIKK…RSKK), 2477–2569 (ERRR…PSCP), 2572–2627 (SREL…LDVD), 2628–2720 (RIKK…RSKK), 2721–2813 (ERRR…PSCP), 2816–2889 (SREL…RSKK), and 2890–2988 (ERRR…IFPQ). Positions 190-200 (EVQKAEESKVP) are enriched in basic and acidic residues. 2 stretches are compositionally biased toward acidic residues: residues 530–539 (NESDDEEEEE) and 550–562 (ESEE…ESWD). 3 disordered regions span residues 754–773 (KDEE…SREL), 828–871 (EKKG…LDEK), and 999–1038 (KGKG…ELLD). Composition is skewed to basic residues over residues 831–849 (GKGK…RRGR) and 1000–1018 (GKGK…RRGR). The disordered stretch occupies residues 1243 to 1282 (KGKGKKRRGRRSKKERRRGRKEGEEDQNPPCPRLSRELLD). Basic residues predominate over residues 1244-1262 (GKGKKRRGRRSKKERRRGR). The disordered stretch occupies residues 1487–1521 (KGKGKKRRGRRSKKERRRGRKEGEEDQNPPCPRLS). Positions 1488-1506 (GKGKKRRGRRSKKERRRGR) are enriched in basic residues. The segment at 1731-1770 (KGKGKKRRGRRSKKERRRGRKEGEEDQNPPCPRLSRELLD) is disordered. The segment covering 1732–1750 (GKGKKRRGRRSKKERRRGR) has biased composition (basic residues). The interval 1975-2014 (KGKGKKRRGRRSKKERRRGRKEGEEDQNPPCPRLSRELLD) is disordered. A compositionally biased stretch (basic residues) spans 1976-1994 (GKGKKRRGRRSKKERRRGR). Residues 2219 to 2258 (KGKGKKRRGRRSKKERRRGRKEGEEDQNPPCPRLSRELLD) form a disordered region. Residues 2220 to 2238 (GKGKKRRGRRSKKERRRGR) show a composition bias toward basic residues. A disordered region spans residues 2463–2502 (KGKGKKRRGRRSKKERRRGRKEGEEDQNPPCPRLSRELLD). Residues 2464-2482 (GKGKKRRGRRSKKERRRGR) show a composition bias toward basic residues. Disordered stretches follow at residues 2707 to 2745 (KGKG…RELL) and 2877 to 2909 (GKGK…CPRL). Composition is skewed to basic residues over residues 2708 to 2726 (GKGK…RRGR) and 2877 to 2895 (GKGK…RRGR).

Belongs to the NBPF family. Expressed in spleen and fetal liver.

It is found in the cytoplasm. The chain is NBPF family member NBPF14 from Homo sapiens (Human).